The primary structure comprises 250 residues: 2,3-bisphosphoglycerate-dependent phosphoglycerate mutase (250 aa).

Residues 10-17 (RHGESQWN), 23-24 (TG), arginine 62, 89-92 (ERHY), lysine 100, 116-117 (RR), and 185-186 (GN) contribute to the substrate site. Histidine 11 acts as the Tele-phosphohistidine intermediate in catalysis. Catalysis depends on glutamate 89, which acts as the Proton donor/acceptor.

This sequence belongs to the phosphoglycerate mutase family. BPG-dependent PGAM subfamily. Homodimer.

The enzyme catalyses (2R)-2-phosphoglycerate = (2R)-3-phosphoglycerate. It participates in carbohydrate degradation; glycolysis; pyruvate from D-glyceraldehyde 3-phosphate: step 3/5. Functionally, catalyzes the interconversion of 2-phosphoglycerate and 3-phosphoglycerate. In Escherichia coli O139:H28 (strain E24377A / ETEC), this protein is 2,3-bisphosphoglycerate-dependent phosphoglycerate mutase.